Consider the following 211-residue polypeptide: FMN-dependent NADH:quinone oxidoreductase 2 (211 aa).

FMN is bound by residues Ser10 and 17 to 19 (SRS).

It belongs to the azoreductase type 1 family. In terms of assembly, homodimer. FMN is required as a cofactor.

It carries out the reaction 2 a quinone + NADH + H(+) = 2 a 1,4-benzosemiquinone + NAD(+). It catalyses the reaction N,N-dimethyl-1,4-phenylenediamine + anthranilate + 2 NAD(+) = 2-(4-dimethylaminophenyl)diazenylbenzoate + 2 NADH + 2 H(+). Functionally, quinone reductase that provides resistance to thiol-specific stress caused by electrophilic quinones. Also exhibits azoreductase activity. Catalyzes the reductive cleavage of the azo bond in aromatic azo compounds to the corresponding amines. This is FMN-dependent NADH:quinone oxidoreductase 2 from Listeria innocua serovar 6a (strain ATCC BAA-680 / CLIP 11262).